We begin with the raw amino-acid sequence, 419 residues long: L-rhamnose isomerase (419 aa).

Mn(2+)-binding residues include His-262, Asp-294, and Asp-296.

It belongs to the rhamnose isomerase family. As to quaternary structure, homotetramer. It depends on Mn(2+) as a cofactor.

The protein resides in the cytoplasm. The enzyme catalyses L-rhamnopyranose = L-rhamnulose. It participates in carbohydrate degradation; L-rhamnose degradation; glycerone phosphate from L-rhamnose: step 1/3. Catalyzes the interconversion of L-rhamnose and L-rhamnulose. This is L-rhamnose isomerase from Klebsiella pneumoniae subsp. pneumoniae (strain ATCC 700721 / MGH 78578).